A 266-amino-acid polypeptide reads, in one-letter code: Thymidylate synthase (266 aa).

DUMP contacts are provided by residues Arg21 and 127–128 (RR). Cys147 acts as the Nucleophile in catalysis. Residues 168–171 (RSAD), Asn179, and 209–211 (HIY) each bind dUMP. Asp171 contacts (6R)-5,10-methylene-5,6,7,8-tetrahydrofolate. Ala265 lines the (6R)-5,10-methylene-5,6,7,8-tetrahydrofolate pocket.

Belongs to the thymidylate synthase family. Bacterial-type ThyA subfamily. Homodimer.

The protein resides in the cytoplasm. The enzyme catalyses dUMP + (6R)-5,10-methylene-5,6,7,8-tetrahydrofolate = 7,8-dihydrofolate + dTMP. It participates in pyrimidine metabolism; dTTP biosynthesis. Functionally, catalyzes the reductive methylation of 2'-deoxyuridine-5'-monophosphate (dUMP) to 2'-deoxythymidine-5'-monophosphate (dTMP) while utilizing 5,10-methylenetetrahydrofolate (mTHF) as the methyl donor and reductant in the reaction, yielding dihydrofolate (DHF) as a by-product. This enzymatic reaction provides an intracellular de novo source of dTMP, an essential precursor for DNA biosynthesis. In Brachyspira hyodysenteriae (strain ATCC 49526 / WA1), this protein is Thymidylate synthase.